The primary structure comprises 241 residues: MNVITCRHYEELSEKAASIIAETVKQKPDAVLGLATGGTPEGVYKELVRMHRSEGLSFRNVTTINLDEYAGLSPEDKNSYHYYMNTHFFAHIDSRKDRHFLPDGRADDLDAECGRYDRLIQTLGGADIQLLGIGHNGHIGFNEPGTPFESRTHVVELNEETRQANARYFPSIDQVPVKALTMGIGTILSGKRILIMASGKSKAQAVKQLLDGRISEAFPASALHAHPDVTVLIDEKAAGGD.

Asp-67 functions as the Proton acceptor; for enolization step in the catalytic mechanism. Asn-136 acts as the For ring-opening step in catalysis. His-138 functions as the Proton acceptor; for ring-opening step in the catalytic mechanism. Glu-143 functions as the For ring-opening step in the catalytic mechanism.

The protein belongs to the glucosamine/galactosamine-6-phosphate isomerase family. NagB subfamily.

It carries out the reaction alpha-D-glucosamine 6-phosphate + H2O = beta-D-fructose 6-phosphate + NH4(+). It functions in the pathway amino-sugar metabolism; N-acetylneuraminate degradation; D-fructose 6-phosphate from N-acetylneuraminate: step 5/5. Functionally, catalyzes the reversible isomerization-deamination of glucosamine 6-phosphate (GlcN6P) to form fructose 6-phosphate (Fru6P) and ammonium ion. The polypeptide is Glucosamine-6-phosphate deaminase (Bacillus velezensis (strain DSM 23117 / BGSC 10A6 / LMG 26770 / FZB42) (Bacillus amyloliquefaciens subsp. plantarum)).